The primary structure comprises 64 residues: Large ribosomal subunit protein bL33c (64 aa).

This sequence belongs to the bacterial ribosomal protein bL33 family.

It is found in the plastid. The protein localises to the chloroplast. This Cyanidium caldarium (Red alga) protein is Large ribosomal subunit protein bL33c (rpl33).